The following is a 503-amino-acid chain: ATP synthase subunit alpha (503 aa).

170–177 (GDRQTGKT) contributes to the ATP binding site.

This sequence belongs to the ATPase alpha/beta chains family. As to quaternary structure, F-type ATPases have 2 components, CF(1) - the catalytic core - and CF(0) - the membrane proton channel. CF(1) has five subunits: alpha(3), beta(3), gamma(1), delta(1), epsilon(1). CF(0) has three main subunits: a(1), b(2) and c(9-12). The alpha and beta chains form an alternating ring which encloses part of the gamma chain. CF(1) is attached to CF(0) by a central stalk formed by the gamma and epsilon chains, while a peripheral stalk is formed by the delta and b chains.

The protein localises to the cell inner membrane. The enzyme catalyses ATP + H2O + 4 H(+)(in) = ADP + phosphate + 5 H(+)(out). Its function is as follows. Produces ATP from ADP in the presence of a proton gradient across the membrane. The alpha chain is a regulatory subunit. The sequence is that of ATP synthase subunit alpha from Geobacter metallireducens (strain ATCC 53774 / DSM 7210 / GS-15).